The primary structure comprises 556 residues: Phosphoglucomutase (556 aa).

Arginine 22 and serine 114 together coordinate alpha-D-glucose 1,6-bisphosphate. Serine 114 acts as the Phosphoserine intermediate in catalysis. Mg(2+) is bound by residues serine 114, aspartate 279, aspartate 281, and aspartate 283. At serine 114 the chain carries Phosphoserine. Aspartate 283, arginine 284, threonine 347, glutamate 366, serine 368, and lysine 379 together coordinate alpha-D-glucose 1,6-bisphosphate.

This sequence belongs to the phosphohexose mutase family. Monomer. The cofactor is Mg(2+).

The protein resides in the cytoplasm. It catalyses the reaction alpha-D-glucose 1-phosphate = alpha-D-glucose 6-phosphate. It carries out the reaction O-phospho-L-seryl-[protein] + alpha-D-glucose 1-phosphate = alpha-D-glucose 1,6-bisphosphate + L-seryl-[protein]. The enzyme catalyses alpha-D-glucose 1,6-bisphosphate + L-seryl-[protein] = O-phospho-L-seryl-[protein] + alpha-D-glucose 6-phosphate. Its function is as follows. Catalyzes the reversible isomerization of alpha-D-glucose 1-phosphate to alpha-D-glucose 6-phosphate. The mechanism proceeds via the intermediate compound alpha-D-glucose 1,6-bisphosphate. Key enzyme in hexose metabolism. The reverse reaction is an essential step for biosynthesis because glucose 1-phosphate is the starting point for the synthesis of UDP-glucose, which acts as a precursor for the synthesis of oligosaccharides and trehalose. This is Phosphoglucomutase (pgmB) from Emericella nidulans (strain FGSC A4 / ATCC 38163 / CBS 112.46 / NRRL 194 / M139) (Aspergillus nidulans).